An 82-amino-acid polypeptide reads, in one-letter code: Turripeptide Gdm9.1 (82 aa).

Residues 1-23 form the signal peptide; it reads MMAKLMITVMMVLLLSLQQGADG. Positions 24–46 are excised as a propeptide; it reads RSERWRKNQMAASRIMRNLITAR. P49 and P50 each carry 4-hydroxyproline. 3 disulfides stabilise this stretch: C53-C68, C58-C72, and C64-C79. E60 and E63 each carry 4-carboxyglutamate.

The protein belongs to the Pg turripeptide superfamily. In terms of tissue distribution, expressed by the venom duct.

Its subcellular location is the secreted. The sequence is that of Turripeptide Gdm9.1 from Gemmula diomedea (Gem-turris).